The following is a 488-amino-acid chain: Ribulose bisphosphate carboxylase large chain 2 (488 aa).

Substrate-binding residues include Asn128 and Thr178. The Proton acceptor role is filled by Lys180. Lys182 serves as a coordination point for substrate. Mg(2+) contacts are provided by Lys206, Asp208, and Glu209. Lys206 carries the N6-carboxylysine modification. Residue His298 is the Proton acceptor of the active site. The substrate site is built by Arg299, His331, and Ser383.

The protein belongs to the RuBisCO large chain family. Type I subfamily. Heterohexadecamer of 8 large chains and 8 small chains. Mg(2+) is required as a cofactor.

The enzyme catalyses 2 (2R)-3-phosphoglycerate + 2 H(+) = D-ribulose 1,5-bisphosphate + CO2 + H2O. It catalyses the reaction D-ribulose 1,5-bisphosphate + O2 = 2-phosphoglycolate + (2R)-3-phosphoglycerate + 2 H(+). In terms of biological role, ruBisCO catalyzes two reactions: the carboxylation of D-ribulose 1,5-bisphosphate, the primary event in carbon dioxide fixation, as well as the oxidative fragmentation of the pentose substrate. Both reactions occur simultaneously and in competition at the same active site. The sequence is that of Ribulose bisphosphate carboxylase large chain 2 from Nitrobacter hamburgensis (strain DSM 10229 / NCIMB 13809 / X14).